Here is a 213-residue protein sequence, read N- to C-terminus: StAR-related lipid transfer protein 5 (213 aa).

The START domain maps to 1 to 213 (MDPALAAQMS…LQKAVKQFHE (213 aa)).

Its function is as follows. May be involved in the intracellular transport of sterols or other lipids. May bind cholesterol or other sterols. The chain is StAR-related lipid transfer protein 5 (STARD5) from Homo sapiens (Human).